A 474-amino-acid chain; its full sequence is tRNA-2-methylthio-N(6)-dimethylallyladenosine synthase (474 aa).

Residues 3–120 (KKLHIKTWGC…LPEMIDQIEA (118 aa)) enclose the MTTase N-terminal domain. Residues Cys-12, Cys-49, Cys-83, Cys-157, Cys-161, and Cys-164 each coordinate [4Fe-4S] cluster. Residues 143–375 (RADGPSAFVS…QDRITQQAMR (233 aa)) enclose the Radical SAM core domain. A TRAM domain is found at 378–441 (RQMLGTVQRI…TNSLRGNFIR (64 aa)).

Belongs to the methylthiotransferase family. MiaB subfamily. As to quaternary structure, monomer. The cofactor is [4Fe-4S] cluster.

The protein resides in the cytoplasm. It carries out the reaction N(6)-dimethylallyladenosine(37) in tRNA + (sulfur carrier)-SH + AH2 + 2 S-adenosyl-L-methionine = 2-methylsulfanyl-N(6)-dimethylallyladenosine(37) in tRNA + (sulfur carrier)-H + 5'-deoxyadenosine + L-methionine + A + S-adenosyl-L-homocysteine + 2 H(+). Its function is as follows. Catalyzes the methylthiolation of N6-(dimethylallyl)adenosine (i(6)A), leading to the formation of 2-methylthio-N6-(dimethylallyl)adenosine (ms(2)i(6)A) at position 37 in tRNAs that read codons beginning with uridine. This is tRNA-2-methylthio-N(6)-dimethylallyladenosine synthase from Shewanella woodyi (strain ATCC 51908 / MS32).